The chain runs to 569 residues: ATP-dependent RNA helicase dhh1 (569 aa).

Residues 1 to 16 (MSDQLADQLKATSLSS) are compositionally biased toward polar residues. A disordered region spans residues 1–39 (MSDQLADQLKATSLSSGPEDWKKGLNLPARDTRQQTEDV). The Q motif signature appears at 45–73 (LDWEDFIHDRDLLMGIFEAGFEKPSPIQE). In terms of domain architecture, Helicase ATP-binding spans 76 to 246 (IPVALTGRDI…DKNMTSPYEI (171 aa)). 89–96 (AKNGTGKT) serves as a coordination point for ATP. The short motif at 194-197 (DEAD) is the DEAD box element. The 161-residue stretch at 256-416 (GITQYYAFVE…PIPQTIDKSL (161 aa)) folds into the Helicase C-terminal domain. The disordered stretch occupies residues 436-569 (AQQPQQQLQQ…GQPQGPLSAQ (134 aa)). Positions 437–482 (QQPQQQLQQSQRPQQSQQQQHFSTQTQPSNQLPPQQGNQQLGFNPQ) are enriched in low complexity. The segment covering 495–520 (GDWQGQNGRQNGTGASNNQPRPTNYQ) has biased composition (polar residues). A compositionally biased stretch (gly residues) spans 529–542 (SRGGRGRGFQGQGG). A compositionally biased stretch (low complexity) spans 543 to 569 (RQNQNYGGQRGPRTQGQGQPQGPLSAQ).

It belongs to the DEAD box helicase family. DDX6/DHH1 subfamily.

It localises to the cytoplasm. The protein localises to the P-body. The catalysed reaction is ATP + H2O = ADP + phosphate + H(+). Its function is as follows. ATP-dependent RNA helicase involved in mRNA turnover, and more specifically in mRNA decapping. Is involved in G1/S DNA-damage checkpoint recovery, probably through the regulation of the translational status of a subset of mRNAs. May also have a role in translation and mRNA nuclear export. The polypeptide is ATP-dependent RNA helicase dhh1 (drh-10) (Neurospora crassa (strain ATCC 24698 / 74-OR23-1A / CBS 708.71 / DSM 1257 / FGSC 987)).